The primary structure comprises 363 residues: MTYTSGRILGSMCTSSHPLARRVYCDFLESNLGDPGLFRGTRELESGVIGMLGELLSEPDAAGHIITGGTEANLMAMRAARNMAGAEKPEIIVPKSAHFSFRKAADILGLRLREAELDQDYRVDVESVRKLISENTVAVVGVAGTTELGRIDPVEELSEICLDEDIHLHIDAAFGGFIIPFLRETGAELPEFDFKLQGVSSITVDPHKMGLAPIPSGCILFRDASYLDAMSIETPYLTEKQQSTIVGTRTGASAAATWAIMKHMGREGYRKLALRVMGVTRRLRDGLVELDYQLVVEPELNIVAFNHPAMGPHELADRLEELGWAVSVSSCPPAIRVVLMPHIMEEHIELLLRDLEGIRLREE.

N6-(pyridoxal phosphate)lysine is present on Lys-208.

It belongs to the group II decarboxylase family. MfnA subfamily. Pyridoxal 5'-phosphate is required as a cofactor.

The catalysed reaction is L-tyrosine + H(+) = tyramine + CO2. It carries out the reaction L-aspartate + H(+) = beta-alanine + CO2. Its pathway is cofactor biosynthesis; methanofuran biosynthesis. It participates in cofactor biosynthesis; coenzyme A biosynthesis. Catalyzes the decarboxylation of L-tyrosine to produce tyramine for methanofuran biosynthesis. Can also catalyze the decarboxylation of L-aspartate to produce beta-alanine for coenzyme A (CoA) biosynthesis. The sequence is that of Probable L-tyrosine/L-aspartate decarboxylase from Methanothermobacter thermautotrophicus (strain ATCC 29096 / DSM 1053 / JCM 10044 / NBRC 100330 / Delta H) (Methanobacterium thermoautotrophicum).